A 361-amino-acid polypeptide reads, in one-letter code: Chorismate synthase (361 aa).

Arg-48 and Arg-54 together coordinate NADP(+). FMN-binding positions include 125–127, 238–239, Gly-278, 293–297, and Arg-319; these read RSS, NA, and KPTSS.

This sequence belongs to the chorismate synthase family. Homotetramer. The cofactor is FMNH2.

The catalysed reaction is 5-O-(1-carboxyvinyl)-3-phosphoshikimate = chorismate + phosphate. It participates in metabolic intermediate biosynthesis; chorismate biosynthesis; chorismate from D-erythrose 4-phosphate and phosphoenolpyruvate: step 7/7. Its function is as follows. Catalyzes the anti-1,4-elimination of the C-3 phosphate and the C-6 proR hydrogen from 5-enolpyruvylshikimate-3-phosphate (EPSP) to yield chorismate, which is the branch point compound that serves as the starting substrate for the three terminal pathways of aromatic amino acid biosynthesis. This reaction introduces a second double bond into the aromatic ring system. The chain is Chorismate synthase from Edwardsiella ictaluri (strain 93-146).